The following is a 211-amino-acid chain: Thiamine-phosphate synthase (211 aa).

4-amino-2-methyl-5-(diphosphooxymethyl)pyrimidine contacts are provided by residues 37–41 (QLRIK) and N69. D70 and D89 together coordinate Mg(2+). Residue S108 coordinates 4-amino-2-methyl-5-(diphosphooxymethyl)pyrimidine. 134–136 (TQT) lines the 2-[(2R,5Z)-2-carboxy-4-methylthiazol-5(2H)-ylidene]ethyl phosphate pocket. Residue K137 participates in 4-amino-2-methyl-5-(diphosphooxymethyl)pyrimidine binding. 2-[(2R,5Z)-2-carboxy-4-methylthiazol-5(2H)-ylidene]ethyl phosphate-binding positions include G166 and 186–187 (VS).

This sequence belongs to the thiamine-phosphate synthase family. The cofactor is Mg(2+).

The enzyme catalyses 2-[(2R,5Z)-2-carboxy-4-methylthiazol-5(2H)-ylidene]ethyl phosphate + 4-amino-2-methyl-5-(diphosphooxymethyl)pyrimidine + 2 H(+) = thiamine phosphate + CO2 + diphosphate. It catalyses the reaction 2-(2-carboxy-4-methylthiazol-5-yl)ethyl phosphate + 4-amino-2-methyl-5-(diphosphooxymethyl)pyrimidine + 2 H(+) = thiamine phosphate + CO2 + diphosphate. The catalysed reaction is 4-methyl-5-(2-phosphooxyethyl)-thiazole + 4-amino-2-methyl-5-(diphosphooxymethyl)pyrimidine + H(+) = thiamine phosphate + diphosphate. Its pathway is cofactor biosynthesis; thiamine diphosphate biosynthesis; thiamine phosphate from 4-amino-2-methyl-5-diphosphomethylpyrimidine and 4-methyl-5-(2-phosphoethyl)-thiazole: step 1/1. Condenses 4-methyl-5-(beta-hydroxyethyl)thiazole monophosphate (THZ-P) and 2-methyl-4-amino-5-hydroxymethyl pyrimidine pyrophosphate (HMP-PP) to form thiamine monophosphate (TMP). The sequence is that of Thiamine-phosphate synthase from Salmonella agona (strain SL483).